Here is an 858-residue protein sequence, read N- to C-terminus: Potassium channel KOR1 (858 aa).

Residues 1–41 form a disordered region; sequence MGRGIGSKRRVEDDDGENMPGRKKKEEEEEEEDDDGEEEYE. At 1-102 the chain is on the cytoplasmic side; the sequence is MGRGIGSKRR…PDNKWYRLWT (102 aa). A compositionally biased stretch (acidic residues) spans 27 to 41; sequence EEEEEEDDDGEEEYE. Residues 103–123 traverse the membrane as a helical segment; that stretch reads RFILVWAVYSSFFTPLEFGFF. The Extracellular segment spans residues 124–130; that stretch reads RGLPRNL. A helical transmembrane segment spans residues 131–151; that stretch reads FFLDIAGQIAFLIDIVLRFFV. Residues 152-174 are Cytoplasmic-facing; the sequence is AYRDPDTYRMVHNPTSIALRYCK. The helical transmembrane segment at 175 to 195 threads the bilayer; the sequence is SSFIFDLLGCFPWDAIYKACG. Topologically, residues 196–201 are extracellular; the sequence is SKEEVR. Residues 202-222 traverse the membrane as a helical; Voltage-sensor segment; sequence YLLWIRLTRAMKVTEFFRSME. Over 223–236 the chain is Cytoplasmic; that stretch reads KDIRINYLFTRIVK. A helical membrane pass occupies residues 237–257; it reads LIVVELYCTHTAACIFYYLAT. The Extracellular segment spans residues 258-292; that stretch reads TLPESMEGYTWIGSLQLGDYSYSHFREIDLTKRYM. The pore-forming intramembrane region spans 293 to 312; it reads TSLYFAIVTMATVGYGDIHA. Over 313–316 the chain is Extracellular; sequence VNVR. The chain crosses the membrane as a helical span at residues 317 to 337; the sequence is EMIFIMIYVSFDMILGAYLIG. Residues 338 to 858 are Cytoplasmic-facing; that stretch reads NMTALIVKGS…GDDGGTEARQ (521 aa). 419 to 539 is an a nucleoside 3',5'-cyclic phosphate binding site; it reads LFKGCSAEFI…RRILSNLSES (121 aa). 6 ANK repeats span residues 559-592, 596-625, 629-658, 660-689, 693-722, and 726-756; these read KQEAELTLRVNNAAFYGDMHQLKSLIRAGADPKN, DGRSPLHLAACKGFEDVVQFLLHEGVDIDL, FGNTPLLEAVKQGHDRVATLLFSKGAKLSL, NAGSHLCTAVARGDTDFVRRALAYGGDPNA, DHRAPLHIAAAEGLYLMAKLLVDAGASVFA, and WGTTPLDEGRRCGSRTMVQLLEAAKSGELSR. Residues 772–858 enclose the KHA domain; sequence RCSVFPHHPW…GDDGGTEARQ (87 aa).

The protein belongs to the potassium channel family. Plant (TC 1.A.1.4) subfamily.

It is found in the membrane. Functionally, probable outward-rectifying potassium channel. This chain is Potassium channel KOR1, found in Oryza sativa subsp. japonica (Rice).